Consider the following 217-residue polypeptide: Ras-like protein (217 aa).

17-24 (GGGGVGKS) contacts GTP. Residues 39 to 47 (YDPTIEDSY) carry the Effector region motif. Residues 64-68 (DTAGQ) and 123-126 (NKCD) each bind GTP. A disordered region spans residues 181 to 200 (TGRMMTGGGGGGPPGTYAGK). The segment covering 185–194 (MTGGGGGGPP) has biased composition (gly residues). Residues cysteine 210 and cysteine 211 are each lipidated (S-palmitoyl cysteine). Cysteine 214 is modified (cysteine methyl ester). Cysteine 214 carries S-geranylgeranyl cysteine lipidation. Positions 215-217 (VVL) are cleaved as a propeptide — removed in mature form.

Belongs to the small GTPase superfamily. Ras family.

Its subcellular location is the cell membrane. The enzyme catalyses GTP + H2O = GDP + phosphate + H(+). With respect to regulation, alternates between an inactive form bound to GDP and an active form bound to GTP. Activated by a guanine nucleotide-exchange factor (GEF) and inactivated by a GTPase-activating protein (GAP). This chain is Ras-like protein, found in Lentinula edodes (Shiitake mushroom).